Here is a 129-residue protein sequence, read N- to C-terminus: NADH-quinone oxidoreductase subunit A (129 aa).

The next 3 helical transmembrane spans lie at 14–34 (LAIH…VAAW), 67–87 (FLIA…FAWA), and 95–115 (WLGL…LVYL).

Belongs to the complex I subunit 3 family. NDH-1 is composed of 14 different subunits. Subunits NuoA, H, J, K, L, M, N constitute the membrane sector of the complex.

The protein resides in the cell inner membrane. It catalyses the reaction a quinone + NADH + 5 H(+)(in) = a quinol + NAD(+) + 4 H(+)(out). NDH-1 shuttles electrons from NADH, via FMN and iron-sulfur (Fe-S) centers, to quinones in the respiratory chain. The immediate electron acceptor for the enzyme in this species is believed to be ubiquinone. Couples the redox reaction to proton translocation (for every two electrons transferred, four hydrogen ions are translocated across the cytoplasmic membrane), and thus conserves the redox energy in a proton gradient. This Rhodopseudomonas palustris (strain ATCC BAA-98 / CGA009) protein is NADH-quinone oxidoreductase subunit A.